The chain runs to 685 residues: Amino acid transporter heavy chain SLC3A1 (685 aa).

The segment covering 1–10 (MDEDKGKRDP) has biased composition (basic and acidic residues). Residues 1-53 (MDEDKGKRDPIQMSLKGCRTNNGFVQNEDIPEQDPDPGSRDTPQPNAVSIPAP) form a disordered region. Residues 1 to 88 (MDEDKGKRDP…ARYRVPREIL (88 aa)) lie on the Cytoplasmic side of the membrane. The helical; Signal-anchor for type II membrane protein transmembrane segment at 89 to 109 (FWLTVVSVFLLIGATIAIIVI) threads the bilayer. Residues 110–685 (SPKCLDWWQA…SALDILYSSC (576 aa)) lie on the Extracellular side of the membrane. N213 contacts Ca(2+). N213, N240, and N260 each carry an N-linked (GlcNAc...) asparagine glycan. A disulfide bridge links C241 with C272. Positions 283, 317, 318, and 320 each coordinate Ca(2+). N331 is a glycosylation site (N-linked (GlcNAc...) asparagine). A Phosphoserine modification is found at S385. N512 and N522 each carry an N-linked (GlcNAc...) asparagine glycan. 2 cysteine pairs are disulfide-bonded: C570–C666 and C673–C685.

As to quaternary structure, disulfide-linked heterodimer composed of the catalytic light subunit SLC7A9 and the heavy subunit SLC3A1. The heterodimer is the minimal functional unit. Assembles in non-covalently linked heterotetramers (dimers of heterodimers) and higher order oligomers; the oligomerization is mediated by SLC3A1 likely to prevent degradation in the endoplasmic reticulum and facilitate heteromer trafficking to the plasma membrane. Disulfide-linked heterodimer composed of the catalytic light subunit SLC7A13 and the heavy subunit SLC3A1. Expressed in the brush border membrane in the kidney (at protein level). Highly expressed in renal tubules in the outer stripe of the outer medulla and medullary ray (at protein level). Also detected in the renal cortex. More abundant in male than female kidneys.

Its subcellular location is the cell membrane. The protein localises to the apical cell membrane. Functionally, acts as a chaperone that facilitates biogenesis and trafficking of functional transporter heteromers to the plasma membrane. Associates with SLC7A9 to form a functional transporter complex that mediates the electrogenic exchange between cationic amino acids and neutral amino acids, with a stoichiometry of 1:1. SLC7A9-SLC3A1 transporter has system b(0,+)-like activity with high affinity for extracellular cationic amino acids and L-cystine and lower affinity for intracellular neutral amino acids. Substrate exchange is driven by high concentration of intracellular neutral amino acids and the intracellular reduction of L-cystine to L-cysteine. SLC7A9-SLC3A1 acts as a major transporter for reabsorption of L-cystine and dibasic amino acids across the brush border membrane in early proximal tubules. Associates with SLC7A13 to form a functional complex that transports anionic and neutral amino acids via exchange or facilitated diffusion. SLC7A13-SLC3A1 may act as a major transporter for L-cystine in late proximal tubules, ensuring its reabsorption from the luminal fluid in exchange for cytosolic L-glutamate or L-aspartate. The sequence is that of Amino acid transporter heavy chain SLC3A1 from Mus musculus (Mouse).